A 792-amino-acid chain; its full sequence is 5-methyltetrahydropteroyltriglutamate--homocysteine methyltransferase (792 aa).

Residues 16 to 19 (RELK) and lysine 112 contribute to the 5-methyltetrahydropteroyltri-L-glutamate site. Residues 432 to 434 (IGS) and glutamate 485 each bind L-homocysteine. L-methionine is bound by residues 432 to 434 (IGS) and glutamate 485. Residues 516–517 (RC) and tryptophan 562 each bind 5-methyltetrahydropteroyltri-L-glutamate. Aspartate 600 is a binding site for L-homocysteine. Residue aspartate 600 coordinates L-methionine. 5-methyltetrahydropteroyltri-L-glutamate is bound at residue glutamate 606. Positions 642, 644, and 666 each coordinate Zn(2+). Histidine 695 (proton donor) is an active-site residue. Cysteine 727 contributes to the Zn(2+) binding site.

Belongs to the vitamin-B12 independent methionine synthase family. It depends on Zn(2+) as a cofactor.

The catalysed reaction is 5-methyltetrahydropteroyltri-L-glutamate + L-homocysteine = tetrahydropteroyltri-L-glutamate + L-methionine. It functions in the pathway amino-acid biosynthesis; L-methionine biosynthesis via de novo pathway; L-methionine from L-homocysteine (MetE route): step 1/1. Catalyzes the transfer of a methyl group from 5-methyltetrahydrofolate to homocysteine resulting in methionine formation. This chain is 5-methyltetrahydropteroyltriglutamate--homocysteine methyltransferase, found in Cupriavidus necator (Alcaligenes eutrophus).